The sequence spans 436 residues: Protein GOLM2 (436 aa).

At methionine 1 the chain carries N-acetylmethionine. Topologically, residues 1–14 (MVGFGANRRAGRLP) are cytoplasmic. Residues 15–35 (SLVLVVLLVVIVVLAFNYWSI) traverse the membrane as a helical; Signal-anchor for type II membrane protein segment. Residues 35–195 (ISSRHVLLQE…QFLQEQKQEA (161 aa)) are a coiled coil. Residues 36–436 (SSRHVLLQEE…YGKQHFNDVL (401 aa)) lie on the Lumenal side of the membrane. Basic and acidic residues-rich tracts occupy residues 193–207 (QEAHKIQSNDGKELD) and 224–247 (VADKNEEPSSNHIPHGKEQIKRGG). The segment at 193-436 (QEAHKIQSND…YGKQHFNDVL (244 aa)) is disordered. Phosphoserine is present on residues serine 233 and serine 275. 2 stretches are compositionally biased toward polar residues: residues 275 to 295 (SVSQHESHQTISHIPTGQPLS) and 305 to 321 (NHNGNPGTSKQNPSSPL). Phosphoserine is present on residues serine 328 and serine 332. Positions 344 to 362 (ATKDRVSDFHKLKQSRFFD) are enriched in basic and acidic residues. Serine 366 bears the Phosphoserine mark. A compositionally biased stretch (acidic residues) spans 399–418 (YNEEEDGDGGEEDVQDDEER). Positions 426-436 (DYGKQHFNDVL) are enriched in basic and acidic residues.

The protein belongs to the GOLM family.

Its subcellular location is the membrane. This chain is Protein GOLM2 (GOLM2), found in Pongo abelii (Sumatran orangutan).